The primary structure comprises 95 residues: Aspartyl/glutamyl-tRNA(Asn/Gln) amidotransferase subunit C (95 aa).

The protein belongs to the GatC family. Heterotrimer of A, B and C subunits.

It carries out the reaction L-glutamyl-tRNA(Gln) + L-glutamine + ATP + H2O = L-glutaminyl-tRNA(Gln) + L-glutamate + ADP + phosphate + H(+). The enzyme catalyses L-aspartyl-tRNA(Asn) + L-glutamine + ATP + H2O = L-asparaginyl-tRNA(Asn) + L-glutamate + ADP + phosphate + 2 H(+). In terms of biological role, allows the formation of correctly charged Asn-tRNA(Asn) or Gln-tRNA(Gln) through the transamidation of misacylated Asp-tRNA(Asn) or Glu-tRNA(Gln) in organisms which lack either or both of asparaginyl-tRNA or glutaminyl-tRNA synthetases. The reaction takes place in the presence of glutamine and ATP through an activated phospho-Asp-tRNA(Asn) or phospho-Glu-tRNA(Gln). The chain is Aspartyl/glutamyl-tRNA(Asn/Gln) amidotransferase subunit C from Bartonella bacilliformis (strain ATCC 35685 / KC583 / Herrer 020/F12,63).